The primary structure comprises 396 residues: Elongation factor Tu (396 aa).

The tr-type G domain occupies 10 to 206 (KPHVNVGTIG…ALDTYIPTPE (197 aa)). The interval 19–26 (GHVDHGKT) is G1. A GTP-binding site is contributed by 19–26 (GHVDHGKT). Residue Thr26 coordinates Mg(2+). The G2 stretch occupies residues 60-64 (GITIN). Residues 81–84 (DCPG) are G3. Residues 81-85 (DCPGH) and 136-139 (NKAD) each bind GTP. Positions 136–139 (NKAD) are G4. Residues 174–176 (SAK) form a G5 region.

It belongs to the TRAFAC class translation factor GTPase superfamily. Classic translation factor GTPase family. EF-Tu/EF-1A subfamily. As to quaternary structure, monomer.

It is found in the cytoplasm. The catalysed reaction is GTP + H2O = GDP + phosphate + H(+). In terms of biological role, GTP hydrolase that promotes the GTP-dependent binding of aminoacyl-tRNA to the A-site of ribosomes during protein biosynthesis. The chain is Elongation factor Tu from Bordetella bronchiseptica (strain ATCC BAA-588 / NCTC 13252 / RB50) (Alcaligenes bronchisepticus).